The primary structure comprises 118 residues: Late cornified envelope protein 1B (118 aa).

Residues 87–118 are disordered; sequence CHRPQSSGCCSQPSGGSSCCGGGSGQHSGGCC. Over residues 90-103 the composition is skewed to low complexity; it reads PQSSGCCSQPSGGS. Residues 104-118 are compositionally biased toward gly residues; sequence SCCGGGSGQHSGGCC.

The protein belongs to the LCE family. Interacts with CYSRT1; the interaction is direct. Skin-specific. Expression was readily detected in adult trunk skin, adult arm skin, fetal skin, penal skin, vulva, esophagus and tongue. Not expressed in the cervix, rectum, lung, colon, or placenta.

Its function is as follows. Precursors of the cornified envelope of the stratum corneum. The polypeptide is Late cornified envelope protein 1B (LCE1B) (Homo sapiens (Human)).